We begin with the raw amino-acid sequence, 521 residues long: Zinc finger protein GLIS2 (521 aa).

Residues 35 to 174 (ALHRELGLVD…AKQLVCRWAK (140 aa)) form an interaction with CTNND1 region. Disordered regions lie at residues 41 to 63 (GLVD…LLNP) and 84 to 110 (SPPS…DLPP). Positions 49–58 (PGSPGSPPPG) are enriched in pro residues. Positions 71–137 (GRFSAAPLVD…SSFQFFLPLG (67 aa)) are transcription activation. Residues 84–100 (SPPSGLDSPNGSSSLSP) show a composition bias toward low complexity. Residues 148-171 (SFLPPPKDKCLSPELPLAKQLVCR) form a transcription repression region. The C2H2-type 1 zinc finger occupies 168–193 (LVCRWAKCNQLFELLQDLVDHVNDHH). The segment at 202-229 (YCCHWEGCARHGRGFNARYKMLIHIRTH) adopts a C2H2-type 2; atypical zinc-finger fold. C2H2-type zinc fingers lie at residues 235 to 257 (HRCP…NRSH), 263 to 287 (YVCP…TRTH), and 293 to 317 (YYCK…IKAH). Positions 436-501 (AGSKAEGEKG…NSAASSPEVL (66 aa)) are disordered. A compositionally biased stretch (basic and acidic residues) spans 455–470 (GLEDHKTPLERTERSR). The segment covering 487–496 (DLSTGNSAAS) has biased composition (polar residues).

Belongs to the GLI C2H2-type zinc-finger protein family. In terms of assembly, interacts with CTBP1 and HDAC3. Interacts with CTNNB1 and CTNND1. Interacts with SUFU. In terms of processing, C-terminus cleavage is induced by interaction with CTNND1 and enhances by Src tyrosine kinase. Expressed at high levels in kidney, and at lower levels in heart and lung.

It is found in the nucleus speckle. Its subcellular location is the cytoplasm. Can act either as a transcriptional repressor or as a transcriptional activator, depending on the cell context. Acts as a repressor of the Hedgehog signaling pathway. Represses the Hedgehog-dependent expression of Wnt4. Necessary to maintain the differentiated epithelial phenotype in renal cells through the inhibition of SNAI1, which itself induces the epithelial-to-mesenchymal transition. Represses transcriptional activation by CTNNB1 in the Wnt signaling pathway. May act by recruiting the corepressors CTBP1 and HDAC3. May be involved in neuron differentiation. In Mus musculus (Mouse), this protein is Zinc finger protein GLIS2 (Glis2).